A 294-amino-acid polypeptide reads, in one-letter code: MEKVKGAMTALITPFRNGKLDEEAYARLIQRQIDNAIDAVVPVGTTGESATLSHAEHKRCIEIAVEVCKGTSTKVMAGAGSNATHEAIDLAQFAQKAGADAILSVSPYYNKPTQEGLYQHYKALAESVDIPVLLYNVPGRTGVDIKPETVCRLFDDVNNIYGIKEATGSIERCVELLAKRPELYVISGDDAINYPIIANGGMGVISVTANLLPDKISMLVHAGLAGQFDTAKMINDELFDINKALFCESNPIPIKAAMYIAGLIDTLEYRLPLLEPSKEHMQLIEKTLAKYEVV.

Thr-46 contacts pyruvate. The active-site Proton donor/acceptor is Tyr-135. Residue Lys-164 is the Schiff-base intermediate with substrate of the active site. Residue Ile-205 coordinates pyruvate.

It belongs to the DapA family. Homotetramer; dimer of dimers.

The protein resides in the cytoplasm. It carries out the reaction L-aspartate 4-semialdehyde + pyruvate = (2S,4S)-4-hydroxy-2,3,4,5-tetrahydrodipicolinate + H2O + H(+). It participates in amino-acid biosynthesis; L-lysine biosynthesis via DAP pathway; (S)-tetrahydrodipicolinate from L-aspartate: step 3/4. In terms of biological role, catalyzes the condensation of (S)-aspartate-beta-semialdehyde [(S)-ASA] and pyruvate to 4-hydroxy-tetrahydrodipicolinate (HTPA). This is 4-hydroxy-tetrahydrodipicolinate synthase from Nitratiruptor sp. (strain SB155-2).